The primary structure comprises 371 residues: Protein NDRG2 (371 aa).

The tract at residues 1 to 22 (MAELQEVQITEEKPLLPGQTPE) is disordered. N-acetylalanine is present on A2. Residue T20 is modified to Phosphothreonine. Residues S326 and S328 each carry the phosphoserine modification. At T330 the chain carries Phosphothreonine; by SGK1. S332 bears the Phosphoserine; by PKC/PRKCQ or SGK1 mark. T334 bears the Phosphothreonine mark. The disordered stretch occupies residues 334-371 (TSAASIDGSRSRSRTLSQSSESGTLPSGPPGHTMEVSC). Residues S335, S338, and S344 each carry the phosphoserine modification. A Phosphothreonine; by PKB/AKT1 or SGK1 modification is found at T348. A phosphoserine mark is found at S350, S352, S353, and S355. T357 carries the post-translational modification Phosphothreonine. S370 is subject to Phosphoserine.

Belongs to the NDRG family. Interacts with CTNNB1. Expressed at highest levels in brain, heart and liver, and at lower levels in kidney, colon, skeletal muscle, adrenal gland, ovary and uterus (at protein level).

Its subcellular location is the cytoplasm. The protein resides in the perinuclear region. The protein localises to the cell projection. It localises to the growth cone. Contributes to the regulation of the Wnt signaling pathway. Down-regulates CTNNB1-mediated transcriptional activation of target genes, such as CCND1, and may thereby act as tumor suppressor. May be involved in dendritic cell and neuron differentiation. The protein is Protein NDRG2 (Ndrg2) of Mus musculus (Mouse).